We begin with the raw amino-acid sequence, 590 residues long: Probable serine/threonine-protein phosphatase PP2A regulatory subunit (590 aa).

HEAT repeat units lie at residues 37 to 73, 74 to 111, 113 to 150, 151 to 188, 189 to 227, 228 to 266, 267 to 305, 306 to 344, 349 to 387, 388 to 426, 427 to 465, 466 to 504, 505 to 543, and 544 to 582; these read LSTIALALGVERTRNELIQFLTDTIYDEDEVLLVLAE, QLGNFTPLVGGPDHVHCLLLPLENLATVEETVVRDKAV, SLRKIADKHSSASLEEHFVPMLRRLATGDWFTSRTSAC, GLFSVVYPRVSPAIKSELKSMFRTLCRDDTPMVRRAAA, AKLGEFAKVFEKTAVIEGLHSSLTDLHVDEQDSVRLLTV, ESAIAFGTLLDKANKKKLIEPILIELFDDKSWRVRYMVA, EKLIEIQNVLGEDMDTTHLVNMYTNLLKDPEGEVRCAAT, QRLQEFALNLPEDKRQNIICNSLLNVAKELVTDGNQLVK, GVIMGLAPLIGKEQTVSELLPIYMQLLNDQTPEVRLNII, SSLDKVNEVIGAAQLSTSLLPAIVGLAEDGKWRVRLAIV, QFMPLLASQLGQEFFDEKLLPLCLNWLTDHVFSIREAST, LIMKELTQKFGGQWASTNIVPKMQKLQKDTNYLQRMTCL, FCLNTLSEAMTQEQILKEIMPIVKDLVEDDVPNVRFNAA, and KSLKRIGKNLTPSTLTSEVKPLLEKLGKDSDFDVRYFSE.

The protein belongs to the phosphatase 2A regulatory subunit A family. Part of a complex consisting of a common heterodimeric core enzyme, composed of catalytic subunit let-92 and constant regulatory subunit paa-1, that associates with a variety of regulatory subunits which confer distinct properties to the holoenzyme. Interacts with rsa-1.

It is found in the cytoplasm. Its subcellular location is the cytoskeleton. The protein localises to the microtubule organizing center. It localises to the centrosome. The protein resides in the spindle. Functionally, acts as a scaffolding protein for phosphatase let-92 and its regulatory subunits. Probably together with let-92 and regulatory subunit sur-6, regulates centriole duplication, microtubule outgrowth and mitotic spindle stability during early embryonic cell division by preventing the degradation of sas-5 and kinase zyg-1. During vulva development, may play a role with phosphatase let-92 and regulatory subunit sur-6 in the induction of vulva cell precursors by positively regulating let-60/Ras-MAP kinase signaling, probably by promoting lin-45 activation. Plays a positive role in axon guidance probably by inhibiting phosphatase let-92. This Caenorhabditis elegans protein is Probable serine/threonine-protein phosphatase PP2A regulatory subunit (paa-1).